A 425-amino-acid polypeptide reads, in one-letter code: Serine--tRNA ligase (425 aa).

233–235 is an L-serine binding site; it reads TAE. 264–266 is a binding site for ATP; it reads RRE. Glu287 is an L-serine binding site. Residue 351–354 participates in ATP binding; it reads EISS. Position 385 (Ser385) interacts with L-serine.

This sequence belongs to the class-II aminoacyl-tRNA synthetase family. Type-1 seryl-tRNA synthetase subfamily. In terms of assembly, homodimer. The tRNA molecule binds across the dimer.

It is found in the cytoplasm. It catalyses the reaction tRNA(Ser) + L-serine + ATP = L-seryl-tRNA(Ser) + AMP + diphosphate + H(+). The catalysed reaction is tRNA(Sec) + L-serine + ATP = L-seryl-tRNA(Sec) + AMP + diphosphate + H(+). It functions in the pathway aminoacyl-tRNA biosynthesis; selenocysteinyl-tRNA(Sec) biosynthesis; L-seryl-tRNA(Sec) from L-serine and tRNA(Sec): step 1/1. Catalyzes the attachment of serine to tRNA(Ser). Is also able to aminoacylate tRNA(Sec) with serine, to form the misacylated tRNA L-seryl-tRNA(Sec), which will be further converted into selenocysteinyl-tRNA(Sec). This is Serine--tRNA ligase from Parasynechococcus marenigrum (strain WH8102).